Consider the following 161-residue polypeptide: 3-isopropylmalate dehydratase small subunit (161 aa).

Belongs to the LeuD family. LeuD type 2 subfamily. In terms of assembly, heterodimer of LeuC and LeuD.

It carries out the reaction (2R,3S)-3-isopropylmalate = (2S)-2-isopropylmalate. The protein operates within amino-acid biosynthesis; L-leucine biosynthesis; L-leucine from 3-methyl-2-oxobutanoate: step 2/4. Its function is as follows. Catalyzes the isomerization between 2-isopropylmalate and 3-isopropylmalate, via the formation of 2-isopropylmaleate. The sequence is that of 3-isopropylmalate dehydratase small subunit from Pyrobaculum calidifontis (strain DSM 21063 / JCM 11548 / VA1).